The chain runs to 32 residues: ilv operon leader peptide (32 aa).

This chain is ilv operon leader peptide (ilvL), found in Edwardsiella tarda.